The primary structure comprises 148 residues: MFRTMMKSKIHRATVTHADLHYVGSVTVDQDLMDAADLLEGEQVCIVDIDNGARLETYVIAGERGSGVIGINGAAAHLVKPGDLVILIAYGVMNEQEVRDYEPRVVFVDAANSPIELGADPAHAPEGSGLITPRMLSTLDAERESSLV.

Residue S25 is the Schiff-base intermediate with substrate; via pyruvic acid of the active site. S25 bears the Pyruvic acid (Ser) mark. T57 lines the substrate pocket. The active-site Proton donor is Y58. 73-75 (GAA) provides a ligand contact to substrate.

The protein belongs to the PanD family. In terms of assembly, heterooctamer of four alpha and four beta subunits. The cofactor is pyruvate. Is synthesized initially as an inactive proenzyme, which is activated by self-cleavage at a specific serine bond to produce a beta-subunit with a hydroxyl group at its C-terminus and an alpha-subunit with a pyruvoyl group at its N-terminus.

Its subcellular location is the cytoplasm. It catalyses the reaction L-aspartate + H(+) = beta-alanine + CO2. The protein operates within cofactor biosynthesis; (R)-pantothenate biosynthesis; beta-alanine from L-aspartate: step 1/1. In terms of biological role, catalyzes the pyruvoyl-dependent decarboxylation of aspartate to produce beta-alanine. This is Aspartate 1-decarboxylase from Rhodococcus jostii (strain RHA1).